We begin with the raw amino-acid sequence, 198 residues long: Large ribosomal subunit protein bL25 (198 aa).

Belongs to the bacterial ribosomal protein bL25 family. CTC subfamily. In terms of assembly, part of the 50S ribosomal subunit; part of the 5S rRNA/L5/L18/L25 subcomplex. Contacts the 5S rRNA. Binds to the 5S rRNA independently of L5 and L18.

This is one of the proteins that binds to the 5S RNA in the ribosome where it forms part of the central protuberance. The polypeptide is Large ribosomal subunit protein bL25 (Nitrosomonas europaea (strain ATCC 19718 / CIP 103999 / KCTC 2705 / NBRC 14298)).